Consider the following 94-residue polypeptide: Protein translocase subunit SecE (94 aa).

Residues 1 to 32 (MTDAVGSIDMPDAQDEAPDSKKSRKGGKRGKK) are disordered. The span at 22–32 (KSRKGGKRGKK) shows a compositional bias: basic residues. A helical membrane pass occupies residues 65-85 (TVVIIFVVIMIGLVTLIDYGF).

Belongs to the SecE/SEC61-gamma family. Component of the Sec protein translocase complex. Heterotrimer consisting of SecY, SecE and SecG subunits. The heterotrimers can form oligomers, although 1 heterotrimer is thought to be able to translocate proteins. Interacts with the ribosome. Interacts with SecDF, and other proteins may be involved. Interacts with SecA.

It is found in the cell membrane. In terms of biological role, essential subunit of the Sec protein translocation channel SecYEG. Clamps together the 2 halves of SecY. May contact the channel plug during translocation. The chain is Protein translocase subunit SecE from Streptomyces lividans.